The following is a 529-amino-acid chain: Bifunctional purine biosynthesis protein PurH (529 aa).

An MGS-like domain is found at 2 to 149 (TNLVPVGRAL…KNHRFVNVVT (148 aa)).

This sequence belongs to the PurH family.

It catalyses the reaction (6R)-10-formyltetrahydrofolate + 5-amino-1-(5-phospho-beta-D-ribosyl)imidazole-4-carboxamide = 5-formamido-1-(5-phospho-D-ribosyl)imidazole-4-carboxamide + (6S)-5,6,7,8-tetrahydrofolate. The enzyme catalyses IMP + H2O = 5-formamido-1-(5-phospho-D-ribosyl)imidazole-4-carboxamide. It functions in the pathway purine metabolism; IMP biosynthesis via de novo pathway; 5-formamido-1-(5-phospho-D-ribosyl)imidazole-4-carboxamide from 5-amino-1-(5-phospho-D-ribosyl)imidazole-4-carboxamide (10-formyl THF route): step 1/1. The protein operates within purine metabolism; IMP biosynthesis via de novo pathway; IMP from 5-formamido-1-(5-phospho-D-ribosyl)imidazole-4-carboxamide: step 1/1. This is Bifunctional purine biosynthesis protein PurH from Cereibacter sphaeroides (strain ATCC 17029 / ATH 2.4.9) (Rhodobacter sphaeroides).